Reading from the N-terminus, the 392-residue chain is Phospho-N-acetylmuramoyl-pentapeptide-transferase (392 aa).

Helical transmembrane passes span 29–49 (AVMA…FVIR), 76–96 (TMGG…WFDL), 100–120 (FVWI…ADDW), 137–157 (YLWQ…SISE), 193–213 (ISYP…IVGS), 225–245 (GLAI…AYVT), 262–282 (SGEL…FLWF), 289–309 (VFMG…IAVI), 314–334 (IVLA…MMQV), and 369–389 (QVVV…LSTL).

Belongs to the glycosyltransferase 4 family. MraY subfamily. Mg(2+) serves as cofactor.

The protein localises to the cell inner membrane. It catalyses the reaction UDP-N-acetyl-alpha-D-muramoyl-L-alanyl-gamma-D-glutamyl-meso-2,6-diaminopimeloyl-D-alanyl-D-alanine + di-trans,octa-cis-undecaprenyl phosphate = di-trans,octa-cis-undecaprenyl diphospho-N-acetyl-alpha-D-muramoyl-L-alanyl-D-glutamyl-meso-2,6-diaminopimeloyl-D-alanyl-D-alanine + UMP. It participates in cell wall biogenesis; peptidoglycan biosynthesis. Its function is as follows. Catalyzes the initial step of the lipid cycle reactions in the biosynthesis of the cell wall peptidoglycan: transfers peptidoglycan precursor phospho-MurNAc-pentapeptide from UDP-MurNAc-pentapeptide onto the lipid carrier undecaprenyl phosphate, yielding undecaprenyl-pyrophosphoryl-MurNAc-pentapeptide, known as lipid I. In Polaromonas sp. (strain JS666 / ATCC BAA-500), this protein is Phospho-N-acetylmuramoyl-pentapeptide-transferase.